We begin with the raw amino-acid sequence, 325 residues long: Retinal homeobox protein Rx-B (325 aa).

Residues 32–39 (HSIEAILG) carry the Octapeptide motif motif. Positions 75-87 (TEEIHPQQEHLED) are enriched in basic and acidic residues. Positions 75–136 (TEEIHPQQEH…KKKHRRNRTT (62 aa)) are disordered. Positions 99–117 (AKTSSECLSPGLSTSNSDN) are enriched in polar residues. The segment at residues 130–189 (HRRNRTTFTTYQLHELERAFEKSHYPDVYSREELAMKVNLPEVRVQVWFQNRRAKWRRQE) is a DNA-binding region (homeobox). The OAR signature appears at 302 to 315 (NSIASLRMKAKEHI). The Nuclear localization signal signature appears at 308–312 (RMKAK).

It belongs to the paired homeobox family. Bicoid subfamily. In terms of tissue distribution, highly expressed in anterior neural plate followed by neural retina, pigmented epithelium, in pineal gland, diencephalon floor and epiphysis. At later stages, the neuroretina remains the primary site of expression. No expression in the developing lens and cornea.

The protein resides in the nucleus. Plays a critical role in eye formation by regulating the initial specification of retinal cells and/or their subsequent proliferation. This Xenopus laevis (African clawed frog) protein is Retinal homeobox protein Rx-B (rax-b).